We begin with the raw amino-acid sequence, 424 residues long: ATP synthase subunit beta, mitochondrial (424 aa).

A mitochondrion-targeting transit peptide spans 1–60 (MFRLSSGLLKGGACASRSRIPQLGRSLYSTATSAGADKTQGKIHTVIGAVVDVQFNHGRL). ATP-binding positions include 187-194 (GGAGVGKT), 188-195 (GAGVGKTV), 219-220 (ER), and Tyr374.

Belongs to the ATPase alpha/beta chains family. F-type ATPases have 2 components, CF(1) - the catalytic core - and CF(0) - the membrane proton channel. CF(1) has five subunits: alpha(3), beta(3), gamma(1), delta(1), epsilon(1). CF(0) has three main subunits: a, b and c.

Its subcellular location is the mitochondrion. The protein localises to the mitochondrion inner membrane. The catalysed reaction is ATP + H2O + 4 H(+)(in) = ADP + phosphate + 5 H(+)(out). Functionally, ATP synthase subunit beta; part of the gene cluster that mediates the biosynthesis of citreoviridin, an inhibitor of the of F1-ATPase beta-subunit. Mitochondrial membrane ATP synthase (F(1)F(0) ATP synthase or Complex V) produces ATP from ADP in the presence of a proton gradient across the membrane which is generated by electron transport complexes of the respiratory chain. Whereas ctvA to ctvD constitute the core biosynthetic gene cluster, ctvE acts as a self-resistance gene. This Aspergillus terreus (strain NIH 2624 / FGSC A1156) protein is ATP synthase subunit beta, mitochondrial.